Consider the following 282-residue polypeptide: Phosphatidylserine decarboxylase proenzyme (282 aa).

Residues Asp-85, His-142, and Ser-244 each act as charge relay system; for autoendoproteolytic cleavage activity in the active site. Ser-244 serves as the catalytic Schiff-base intermediate with substrate; via pyruvic acid; for decarboxylase activity. Position 244 is a pyruvic acid (Ser); by autocatalysis (Ser-244).

It belongs to the phosphatidylserine decarboxylase family. PSD-B subfamily. Prokaryotic type I sub-subfamily. Heterodimer of a large membrane-associated beta subunit and a small pyruvoyl-containing alpha subunit. Requires pyruvate as cofactor. Post-translationally, is synthesized initially as an inactive proenzyme. Formation of the active enzyme involves a self-maturation process in which the active site pyruvoyl group is generated from an internal serine residue via an autocatalytic post-translational modification. Two non-identical subunits are generated from the proenzyme in this reaction, and the pyruvate is formed at the N-terminus of the alpha chain, which is derived from the carboxyl end of the proenzyme. The autoendoproteolytic cleavage occurs by a canonical serine protease mechanism, in which the side chain hydroxyl group of the serine supplies its oxygen atom to form the C-terminus of the beta chain, while the remainder of the serine residue undergoes an oxidative deamination to produce ammonia and the pyruvoyl prosthetic group on the alpha chain. During this reaction, the Ser that is part of the protease active site of the proenzyme becomes the pyruvoyl prosthetic group, which constitutes an essential element of the active site of the mature decarboxylase.

The protein localises to the cell membrane. The catalysed reaction is a 1,2-diacyl-sn-glycero-3-phospho-L-serine + H(+) = a 1,2-diacyl-sn-glycero-3-phosphoethanolamine + CO2. Its pathway is phospholipid metabolism; phosphatidylethanolamine biosynthesis; phosphatidylethanolamine from CDP-diacylglycerol: step 2/2. Functionally, catalyzes the formation of phosphatidylethanolamine (PtdEtn) from phosphatidylserine (PtdSer). The polypeptide is Phosphatidylserine decarboxylase proenzyme (Coxiella burnetii (strain CbuG_Q212) (Coxiella burnetii (strain Q212))).